Consider the following 313-residue polypeptide: Ribosomal protein L11 methyltransferase (313 aa).

S-adenosyl-L-methionine-binding residues include threonine 161, glycine 182, aspartate 204, and asparagine 247.

It belongs to the methyltransferase superfamily. PrmA family.

It localises to the cytoplasm. The catalysed reaction is L-lysyl-[protein] + 3 S-adenosyl-L-methionine = N(6),N(6),N(6)-trimethyl-L-lysyl-[protein] + 3 S-adenosyl-L-homocysteine + 3 H(+). In terms of biological role, methylates ribosomal protein L11. This Alkaliphilus oremlandii (strain OhILAs) (Clostridium oremlandii (strain OhILAs)) protein is Ribosomal protein L11 methyltransferase.